Consider the following 98-residue polypeptide: Exopolysaccharide production repressor protein (98 aa).

The next 2 membrane-spanning stretches (helical) occupy residues Val-6–Gly-26 and Thr-35–Trp-55. The disordered stretch occupies residues Ala-73 to Ser-98. The segment covering Ser-86–Ser-98 has biased composition (basic residues).

The protein localises to the cell membrane. It participates in glycan metabolism; exopolysaccharide biosynthesis. Functionally, inhibition of exopolysaccharide synthesis (EPS) and nodulation ability (NOD). The chain is Exopolysaccharide production repressor protein (exoX) from Rhizobium meliloti (strain 1021) (Ensifer meliloti).